Consider the following 753-residue polypeptide: 5-methyltetrahydropteroyltriglutamate--homocysteine methyltransferase (753 aa).

5-methyltetrahydropteroyltri-L-glutamate is bound by residues 17–20 and K117; that span reads RELK. L-homocysteine-binding positions include 431 to 433 and E484; that span reads IGS. Residues 431 to 433 and E484 each bind L-methionine; that span reads IGS. 5-methyltetrahydropteroyltri-L-glutamate is bound by residues 515 to 516 and W561; that span reads RC. D599 lines the L-homocysteine pocket. An L-methionine-binding site is contributed by D599. E605 is a binding site for 5-methyltetrahydropteroyltri-L-glutamate. 3 residues coordinate Zn(2+): H641, C643, and E665. H694 serves as the catalytic Proton donor. Residue C726 participates in Zn(2+) binding.

It belongs to the vitamin-B12 independent methionine synthase family. The cofactor is Zn(2+).

The enzyme catalyses 5-methyltetrahydropteroyltri-L-glutamate + L-homocysteine = tetrahydropteroyltri-L-glutamate + L-methionine. Its pathway is amino-acid biosynthesis; L-methionine biosynthesis via de novo pathway; L-methionine from L-homocysteine (MetE route): step 1/1. Its function is as follows. Catalyzes the transfer of a methyl group from 5-methyltetrahydrofolate to homocysteine resulting in methionine formation. In Klebsiella pneumoniae (strain 342), this protein is 5-methyltetrahydropteroyltriglutamate--homocysteine methyltransferase.